We begin with the raw amino-acid sequence, 177 residues long: Large ribosomal subunit protein uL6 (177 aa).

This sequence belongs to the universal ribosomal protein uL6 family. As to quaternary structure, part of the 50S ribosomal subunit.

This protein binds to the 23S rRNA, and is important in its secondary structure. It is located near the subunit interface in the base of the L7/L12 stalk, and near the tRNA binding site of the peptidyltransferase center. The polypeptide is Large ribosomal subunit protein uL6 (Parvibaculum lavamentivorans (strain DS-1 / DSM 13023 / NCIMB 13966)).